The sequence spans 928 residues: MAFSRREFLKSAAAASAASAVGMSVPSQLLAQAQEGEKGWRWDKSVCRFCGTGCGIMVATKNDQIVAVKGDPAAPVNRGLNCIKGYFNAKIMYGADRLTDPLLRVNEKGEFDKQGKFKPVSWKKAFDVMEAQFKRAYNELGPTGIGVFGSGQYTIQEGYMAAKLIKGGFRSNNLDPNARHCMASAVAAFMETFGIDEPAGCYDDIELTDTIITWGANMAEMHPILWARVTDKKLSNPDKVKVINLSTYTNRTSDLADIEIIFTPQTDLAIWNYIAREIVYNHPESIDMEFVKNHCIFTTGFTDIGYGMRTDIKHAKYDPKELDIAAKERSKVLSEAEGVTLRYLGMKAGDVMEMKHNATAGNHWEITFEDFKKALEPYTLDFVAKLAKGNSEESLESFKEKLQKLANLYIEKERKVVSFWTMGMNQHTRGTWVNEQSYMVHFLLGKQAKPGSGAFSLTGQPSACGTAREVGTFSHRLPADMVVANPKHRAVSEKIWKLPEGTLNPKMGAHYMNIMRDLEDGKIKFAWIQVNNPWQNTANANHWIKAAREMDNFIVCSDAYPGISAKVADLILPTAMIYEKWGAYGNAERRTQHWRQQVVPVGNAMPDVWQMAEFSKRFKLKEVWGAKKIDDKLTLPDVLEKAKAMGYSPEDTLFEVLFANSEAKSFKAKDPIGEGFENTEVFGDRRNVAGSDGEVFKGYGFFIHKYLWEEYRRFGNGHGHDLADFDTYHKVRGLKWPVVDGKETQWRFNAKYDPYARKAGSGEFAFYGDAMKELPRGDLLSPKTEEKFKLTNKAKIFFRPYMDPPEMPSSEYPLWLCTGRVLEHWHSGTMTMRVPELYRAVPEALCYMHPEDAKKLGVKQNEAVWVESRRGKVKARVDTRGRNRTPLGLVYVPWFDEKVYINKVCLDATCPISKQTDFKKCAVKVYKA.

The tat-type signal signal peptide spans 1-33 (MAFSRREFLKSAAAASAASAVGMSVPSQLLAQA). The 4Fe-4S Mo/W bis-MGD-type domain maps to 40–96 (WRWDKSVCRFCGTGCGIMVATKNDQIVAVKGDPAAPVNRGLNCIKGYFNAKIMYGAD). [4Fe-4S] cluster-binding residues include Cys-47, Cys-50, Cys-54, and Cys-82. Residues Lys-84, Gln-152, Asn-177, Cys-181, 214 to 221 (WGANMAEM), 265 to 267 (QTD), Met-422, Gln-426, Asn-532, 557 to 558 (SD), Lys-580, Asp-607, and 818 to 827 (TGRVLEHWHS) contribute to the Mo-bis(molybdopterin guanine dinucleotide) site. Trp-894 is a substrate binding site. Residues Asn-902 and Lys-919 each coordinate Mo-bis(molybdopterin guanine dinucleotide).

The protein belongs to the prokaryotic molybdopterin-containing oxidoreductase family. NasA/NapA/NarB subfamily. As to quaternary structure, component of the periplasmic nitrate reductase NapAB complex composed of NapA and NapB. It depends on [4Fe-4S] cluster as a cofactor. Requires Mo-bis(molybdopterin guanine dinucleotide) as cofactor. Predicted to be exported by the Tat system. The position of the signal peptide cleavage has not been experimentally proven.

It localises to the periplasm. The enzyme catalyses 2 Fe(II)-[cytochrome] + nitrate + 2 H(+) = 2 Fe(III)-[cytochrome] + nitrite + H2O. Catalytic subunit of the periplasmic nitrate reductase complex NapAB. Receives electrons from NapB and catalyzes the reduction of nitrate to nitrite. In Wolinella succinogenes (strain ATCC 29543 / DSM 1740 / CCUG 13145 / JCM 31913 / LMG 7466 / NCTC 11488 / FDC 602W) (Vibrio succinogenes), this protein is Periplasmic nitrate reductase.